The primary structure comprises 224 residues: Transcription cofactor HES-6 (224 aa).

Residues 1 to 31 (MAPPAAPGRDRVGREDEDGWETRGDRKARKP) form a disordered region. Positions 8–25 (GRDRVGREDEDGWETRGD) are enriched in basic and acidic residues. The region spanning 25 to 77 (DRKARKPLVEKKRRARINESLQELRLLLAGAEVQAKLENAEVLELTVRRVQGV) is the bHLH domain. An Orange domain is found at 96 to 129 (FAAGYIQCMHEVHTFVSTCQAIDATVAAELLNHL). Over residues 147–161 (DALAGPPRAPGRSGW) the composition is skewed to low complexity. The tract at residues 147–205 (DALAGPPRAPGRSGWPAGGAPGSPIPSPPGPGDDLCSDLEEAPEAELSQAPAEGPDLVP) is disordered. The segment covering 181-190 (LCSDLEEAPE) has biased composition (acidic residues). Residues 221–224 (WRPW) carry the WRPW motif motif.

Transcription repression requires formation of a complex with a corepressor protein of the Groucho/TLE family. Interacts with HES1.

It is found in the nucleus. Functionally, does not bind DNA itself but suppresses both HES1-mediated N box-dependent transcriptional repression and binding of HES1 to E box sequences. Also suppresses HES1-mediated inhibition of the heterodimer formed by ASCL1/MASH1 and TCF3/E47, allowing ASCL1 and TCF3 to up-regulate transcription in its presence. Promotes cell differentiation. The chain is Transcription cofactor HES-6 from Homo sapiens (Human).